The sequence spans 550 residues: CTP synthase (550 aa).

Residues 1–265 (MTKFIFVTGG…DEIVVEQLGL (265 aa)) form an amidoligase domain region. Ser-13 provides a ligand contact to CTP. Residue Ser-13 participates in UTP binding. 14 to 19 (SLGKGI) is a binding site for ATP. Tyr-54 serves as a coordination point for L-glutamine. Asp-71 is an ATP binding site. Mg(2+) is bound by residues Asp-71 and Glu-139. CTP contacts are provided by residues 146–148 (DIE), 186–191 (KTKPTQ), and Lys-222. UTP contacts are provided by residues 186–191 (KTKPTQ) and Lys-222. Positions 290-541 (TITLVGKYVD…IRAAAEHRRR (252 aa)) constitute a Glutamine amidotransferase type-1 domain. Gly-351 is an L-glutamine binding site. The active-site Nucleophile; for glutamine hydrolysis is the Cys-378. Residues 379-382 (LGMQ), Glu-402, and Arg-469 contribute to the L-glutamine site. Residues His-514 and Glu-516 contribute to the active site.

This sequence belongs to the CTP synthase family. In terms of assembly, homotetramer.

It catalyses the reaction UTP + L-glutamine + ATP + H2O = CTP + L-glutamate + ADP + phosphate + 2 H(+). The catalysed reaction is L-glutamine + H2O = L-glutamate + NH4(+). The enzyme catalyses UTP + NH4(+) + ATP = CTP + ADP + phosphate + 2 H(+). It functions in the pathway pyrimidine metabolism; CTP biosynthesis via de novo pathway; CTP from UDP: step 2/2. Allosterically activated by GTP, when glutamine is the substrate; GTP has no effect on the reaction when ammonia is the substrate. The allosteric effector GTP functions by stabilizing the protein conformation that binds the tetrahedral intermediate(s) formed during glutamine hydrolysis. Inhibited by the product CTP, via allosteric rather than competitive inhibition. Catalyzes the ATP-dependent amination of UTP to CTP with either L-glutamine or ammonia as the source of nitrogen. Regulates intracellular CTP levels through interactions with the four ribonucleotide triphosphates. The sequence is that of CTP synthase from Nitrosococcus oceani (strain ATCC 19707 / BCRC 17464 / JCM 30415 / NCIMB 11848 / C-107).